The following is a 619-amino-acid chain: Alpha-L-arabinofuranosidase C (619 aa).

The signal sequence occupies residues 1-37 (MINHNKTPNILAKVFKRTCGLVSTGAALAILSQAASA). Residues 38 to 136 (ACTYTIDSEW…TVTGAACNSA (99 aa)) enclose the CBM2 domain. C39 and C133 are oxidised to a cystine. Positions 163-289 (LLQEAQAGFC…LPNIDSLSVV (127 aa)) constitute a CBM6 domain. Residues 300–319 (SVSSSSSVQSSSSSSSTPSQ) form a disordered region.

Belongs to the glycosyl hydrolase 62 family.

The protein localises to the secreted. It carries out the reaction Hydrolysis of terminal non-reducing alpha-L-arabinofuranoside residues in alpha-L-arabinosides.. The protein operates within glycan metabolism; hemicellulose degradation. Functionally, xylanase C contributes to hydrolyze hemicellulose, the major component of plant cell-walls. This Cellvibrio japonicus (strain Ueda107) (Pseudomonas fluorescens subsp. cellulosa) protein is Alpha-L-arabinofuranosidase C (xynC).